We begin with the raw amino-acid sequence, 260 residues long: 3'-5' ssDNA/RNA exonuclease TatD (260 aa).

Residues glutamate 91, histidine 127, and histidine 152 each contribute to the a divalent metal cation site.

The protein belongs to the metallo-dependent hydrolases superfamily. TatD-type hydrolase family. TatD subfamily. Monomer. Requires Mg(2+) as cofactor.

The protein localises to the cytoplasm. 3'-5' exonuclease that prefers single-stranded DNA and RNA. May play a role in the H(2)O(2)-induced DNA damage repair. The sequence is that of 3'-5' ssDNA/RNA exonuclease TatD from Enterobacter lignolyticus (strain SCF1).